The chain runs to 66 residues: MAVPKRRKSKSKVRTKRAHHAIGKPNLVPCPNCNVYRLPHRICPTCGFYKTGIVLEPKVKKPKEEN.

The segment at 1 to 20 (MAVPKRRKSKSKVRTKRAHH) is disordered.

The protein belongs to the bacterial ribosomal protein bL32 family.

The protein is Large ribosomal subunit protein bL32 of Leptospira borgpetersenii serovar Hardjo-bovis (strain JB197).